The following is a 61-amino-acid chain: Large ribosomal subunit protein bL32 (61 aa).

A compositionally biased stretch (basic residues) spans 1 to 16 (MAVPKRKTSPSKRGMR). The tract at residues 1–39 (MAVPKRKTSPSKRGMRRSADALKAPTYIEDKNSGELRRP) is disordered. Basic and acidic residues predominate over residues 28–39 (IEDKNSGELRRP).

The protein belongs to the bacterial ribosomal protein bL32 family.

In Rhizobium meliloti (strain 1021) (Ensifer meliloti), this protein is Large ribosomal subunit protein bL32.